Reading from the N-terminus, the 98-residue chain is NADH-ubiquinone oxidoreductase chain 4L (98 aa).

3 helical membrane-spanning segments follow: residues 1–21, 28–48, and 61–81; these read MASI…GVLI, STLL…TLLI, and LILL…LVTI.

This sequence belongs to the complex I subunit 4L family. As to quaternary structure, core subunit of respiratory chain NADH dehydrogenase (Complex I) which is composed of 45 different subunits.

The protein localises to the mitochondrion inner membrane. The catalysed reaction is a ubiquinone + NADH + 5 H(+)(in) = a ubiquinol + NAD(+) + 4 H(+)(out). In terms of biological role, core subunit of the mitochondrial membrane respiratory chain NADH dehydrogenase (Complex I) which catalyzes electron transfer from NADH through the respiratory chain, using ubiquinone as an electron acceptor. Part of the enzyme membrane arm which is embedded in the lipid bilayer and involved in proton translocation. The sequence is that of NADH-ubiquinone oxidoreductase chain 4L (MT-ND4L) from Thylamys elegans (Elegant fat-tailed mouse opossum).